Reading from the N-terminus, the 44-residue chain is Antibacterial protein 3 (44 aa).

Methionine 1 is modified (N-formylmethionine).

It belongs to the staphylococcal hemolytic protein family.

Its subcellular location is the secreted. Has hemolytic activity and also inhibits the growth of gonococci. The protein is Antibacterial protein 3 of Staphylococcus haemolyticus.